The primary structure comprises 20 residues: Short cationic peptide-4c (20 aa).

Glu20 carries the glutamic acid 1-amide modification.

Expressed by the venom gland.

The protein localises to the secreted. This is Short cationic peptide-4c from Cupiennius salei (American wandering spider).